Reading from the N-terminus, the 319-residue chain is 4-diphosphocytidyl-2-C-methyl-D-erythritol kinase (319 aa).

Lys21 is a catalytic residue. 106-116 (PIGAGLAGGSS) is a binding site for ATP. The active site involves Asp148.

It belongs to the GHMP kinase family. IspE subfamily.

The catalysed reaction is 4-CDP-2-C-methyl-D-erythritol + ATP = 4-CDP-2-C-methyl-D-erythritol 2-phosphate + ADP + H(+). It participates in isoprenoid biosynthesis; isopentenyl diphosphate biosynthesis via DXP pathway; isopentenyl diphosphate from 1-deoxy-D-xylulose 5-phosphate: step 3/6. In terms of biological role, catalyzes the phosphorylation of the position 2 hydroxy group of 4-diphosphocytidyl-2C-methyl-D-erythritol. This chain is 4-diphosphocytidyl-2-C-methyl-D-erythritol kinase, found in Prochlorococcus marinus (strain MIT 9303).